The chain runs to 533 residues: Putative adhesin domain-containing protein LiaX (533 aa).

The interval 1–277 (MKERERVLEL…EFNYPNPQAS (277 aa)) is binds the antibiotic daptomycin (DAP) and the antimicrobial peptide human LL-37, under physiologically relevant concentrations. Protects the OG1RF and S613 strains from LL-37-mediated killing in a concentration-dependent manner. Positions 63–89 (NALEKGESEGPTVDSFEENTQDSAEKD) are disordered. The stretch at 83 to 186 (QDSAEKDREN…EEELKNIRKE (104 aa)) forms a coiled coil. A putative adhesin region region spans residues 279 to 526 (IDVKVANGTV…INASTTTGSI (248 aa)). The tract at residues 289–526 (VFKTWDQEDV…INASTTTGSI (238 aa)) is involved in cell membrane remodeling.

Post-translationally, may undergo proteolytic cleavage, allowing release of the N-terminal region into the extracellular environment.

Its subcellular location is the secreted. It is found in the cell wall. It localises to the cell membrane. In terms of biological role, involved in cell membrane remodeling, perhaps acting by negative modulation of the liaFSR and liaXYZ gene clusters, thereby regulating content and localization of anionic phospholipids. Binds to the antibiotic daptomycin (DAP) and to cationic antimicrobial peptides, such as human LL-37, perhaps functioning as a sensor that activates the cell envelope stress response. This is Putative adhesin domain-containing protein LiaX from Enterococcus faecalis (strain ATCC 700802 / V583).